Reading from the N-terminus, the 646-residue chain is MSTTNEETQANASKDYSEDALKMSYAAQPLDIMRALKLIEYYESKDDYDNSRKLYAELHERFPLYSPLWTMHLQSELQRNEFDTVEKLLAQCLAGDLENNDLSLWSTYLDYVRRKNNLITGGQEARAVVIKAFKLVMDKCATFEPKASSFWNDYLGFLHQWKPMNKWEEQQRLDMIREVYKKMLCVPFDKLEKMWNQYTLWEQETNTLTARKFIGELSADYMKARSIYQELLNVTANIRRTSPLNLRTANKNNIPQYVLPCKKNDHTQLEAWLKWIAWEKENKLELTEDALKDRVTYVYKQAIQQLLFEPEIWYDYVMYEFDNDAARKNILKVALQANPTSPTLTFKLAECYEVENKSEEVQNCFEKTIDELLRQYKNDNGNDELSSDIIWERKTLTYIYCIYMNTMKRLSGLSAARAVFGKCRKLKKAMTHDIYVENAYLEFQNQNDHKTASKVLELGLKYFGDDGEYINKYMDFLSLLNRGSQMKTLFETSIEKVEDLRQLKKIYVKMIGYESKYGNLNNVYQLEKRFFEKFPDTDLIQLFSTRYKIQDDNKIKNLELTYKLPDIISSDGDPSGVDKSFKKRQIENDENLPDSKRQKSQPLLPKEILDILAVLPKKQYFKNAFLDPSNLVNYLNEQVKLADEEN.

HAT repeat units lie at residues 46 to 78 (DDYD…SELQ), 80 to 114 (NEFD…YVRR), 128 to 160 (VVIK…FLHQ), 171 to 204 (QRLD…WEQE), 249 to 281 (ANKN…WEKE), and 290 to 322 (ALKD…YEFD). The interval 571-599 (DGDPSGVDKSFKKRQIENDENLPDSKRQK) is disordered.

The protein localises to the nucleus. It localises to the cytoplasm. In terms of biological role, component of the cleavage factor IA (CFIA) complex, which is involved in the endonucleolytic cleavage during polyadenylation-dependent pre-mRNA 3'-end formation. The polypeptide is mRNA 3'-end-processing protein RNA14 (RNA14) (Candida glabrata (strain ATCC 2001 / BCRC 20586 / JCM 3761 / NBRC 0622 / NRRL Y-65 / CBS 138) (Yeast)).